The following is a 98-amino-acid chain: HssA/B-like protein 34 (98 aa).

Disordered stretches follow at residues 1 to 26 (MTLFSSISSMSSSMTSSRSSIASFGS) and 60 to 98 (AKSSGGSCGGKGGSHNHGHGHGHGPHGHGGKGSGGSCSC). Residues 60 to 72 (AKSSGGSCGGKGG) show a composition bias toward gly residues. Positions 73–88 (SHNHGHGHGHGPHGHG) are enriched in basic residues. Gly residues predominate over residues 89 to 98 (GKGSGGSCSC).

It belongs to the hssA/B family.

This is HssA/B-like protein 34 (hssl34) from Dictyostelium discoideum (Social amoeba).